Reading from the N-terminus, the 132-residue chain is Ribosome-binding factor A (132 aa).

This sequence belongs to the RbfA family. Monomer. Binds 30S ribosomal subunits, but not 50S ribosomal subunits or 70S ribosomes.

Its subcellular location is the cytoplasm. Functionally, one of several proteins that assist in the late maturation steps of the functional core of the 30S ribosomal subunit. Associates with free 30S ribosomal subunits (but not with 30S subunits that are part of 70S ribosomes or polysomes). Required for efficient processing of 16S rRNA. May interact with the 5'-terminal helix region of 16S rRNA. In Burkholderia vietnamiensis (strain G4 / LMG 22486) (Burkholderia cepacia (strain R1808)), this protein is Ribosome-binding factor A.